Consider the following 155-residue polypeptide: Small ribosomal subunit protein bS6 (155 aa).

Basic and acidic residues predominate over residues E115–T137. Positions E115 to N155 are disordered. Residues D138–N155 are compositionally biased toward acidic residues.

This sequence belongs to the bacterial ribosomal protein bS6 family.

Binds together with bS18 to 16S ribosomal RNA. In Desulforapulum autotrophicum (strain ATCC 43914 / DSM 3382 / VKM B-1955 / HRM2) (Desulfobacterium autotrophicum), this protein is Small ribosomal subunit protein bS6.